A 365-amino-acid chain; its full sequence is Peptide chain release factor 2 (365 aa).

Position 252 is an N5-methylglutamine (Gln252).

The protein belongs to the prokaryotic/mitochondrial release factor family. In terms of processing, methylated by PrmC. Methylation increases the termination efficiency of RF2.

The protein resides in the cytoplasm. Its function is as follows. Peptide chain release factor 2 directs the termination of translation in response to the peptide chain termination codons UGA and UAA. This Shigella flexneri protein is Peptide chain release factor 2.